We begin with the raw amino-acid sequence, 579 residues long: Protein disulfide isomerase-like 1-3 (579 aa).

A signal peptide spans 1-25 (MASSSTSISLLLFVSFILLLVNSRA). N-linked (GlcNAc...) asparagine glycosylation occurs at Asn27. Composition is skewed to basic and acidic residues over residues 44-69 (EESK…RDFE) and 80-89 (EFHHGDHGYE). A disordered region spans residues 44 to 91 (EESKEQSHGGGSYHEEEHDHQHRDFENYDDLEQGGGEFHHGDHGYEEE). Residues 81–204 (FHHGDHGYEE…IVTWLKKKAS (124 aa)) enclose the Thioredoxin 1 domain. 2 N-linked (GlcNAc...) asparagine glycosylation sites follow: Asn108 and Asn115. Catalysis depends on nucleophile residues Cys128 and Cys131. Cys128 and Cys131 are oxidised to a cystine. N-linked (GlcNAc...) asparagine glycosylation is found at Asn209, Asn293, Asn313, and Asn338. Positions 416-546 (DFLADKLKPF…LYKFLKKHAS (131 aa)) constitute a Thioredoxin 2 domain. Active-site nucleophile residues include Cys467 and Cys470. Cysteines 467 and 470 form a disulfide. Residue Asn520 is glycosylated (N-linked (GlcNAc...) asparagine). The interval 558-579 (EPVISTMKSDEKIEGDSSKDEL) is disordered. Over residues 565-579 (KSDEKIEGDSSKDEL) the composition is skewed to basic and acidic residues. The short motif at 576–579 (KDEL) is the Prevents secretion from ER element.

This sequence belongs to the protein disulfide isomerase family. In terms of tissue distribution, widely expressed.

The protein localises to the endoplasmic reticulum lumen. It carries out the reaction Catalyzes the rearrangement of -S-S- bonds in proteins.. In terms of biological role, acts as a protein-folding catalyst that interacts with nascent polypeptides to catalyze the formation, isomerization, and reduction or oxidation of disulfide bonds. The polypeptide is Protein disulfide isomerase-like 1-3 (PDIL1-3) (Arabidopsis thaliana (Mouse-ear cress)).